We begin with the raw amino-acid sequence, 614 residues long: MIIATAGHVDHGKTTLLQAITGVNADRLPEEKKRGMTIDLGYAYWPQPDGRVPGFIDVPGHEKFLSNMLAGVGGIDHALLVVACDDGVMAQTREHLAILQLTGNPMLTVALTKADRVDEARVDEVERQVKEVLREYGFAEAKLFITAATEGRGMDALREHLLQLPEREHASQHSFRLAIDRAFTVKGAGLVVTGTALSGEVKVGDSLWLTGVNKPMRVRALHAQNQPTETANAGQRIALNIAGDAEKEQINRGDWLLADVPPEPFTRVIVELQTHTPLTQWQPLHIHHAASHVTGRVSLLEDNLAELVFDTPLWLADNDRLVLRDISARNTLAGARVVMLNPPRRGKRKPEYLQWLASLARAQSDADALSVHLERGAVNLADFAWARQLNGEGMRELLQQPGYIQAGYSLLNAPVAARWQRKILDTLATYHEQHRDEPGPGRERLRRMALPMEDEALVLLLIEKMRESGDIHSHHGWLHLPDHKAGFSEEQQAIWQKAEPLFGDEPWWVRDLAKETGTDEQAMRLTLRQAAQQGIITAIVKDRYYRNDRIVEFANMIRDLDQECGSTCAADFRDRLGVGRKLAIQILEYFDRIGFTRRRGNDHLLRDALLFPEK.

The tr-type G domain occupies M1–H173. A G1 region spans residues G7–T14. G7–T14 contributes to the GTP binding site. A G2 region spans residues G35–D39. The G3 stretch occupies residues D57–G60. GTP-binding positions include D57–H61 and T112–D115. The segment at T112–D115 is G4. A G5 region spans residues A147–T149.

It belongs to the TRAFAC class translation factor GTPase superfamily. Classic translation factor GTPase family. SelB subfamily.

It localises to the cytoplasm. Functionally, translation factor necessary for the incorporation of selenocysteine into proteins. It probably replaces EF-Tu for the insertion of selenocysteine directed by the UGA codon. SelB binds GTP and GDP. The sequence is that of Selenocysteine-specific elongation factor (selB) from Escherichia coli (strain K12).